A 121-amino-acid chain; its full sequence is Fluoride-specific ion channel FluC 1 (121 aa).

Transmembrane regions (helical) follow at residues 3–23, 35–55, 64–84, and 92–112; these read YVYI…ISFL, IANL…IAFF, AITT…LELI, and FITL…LCYV. Na(+)-binding residues include Gly-71 and Thr-74.

Belongs to the fluoride channel Fluc/FEX (TC 1.A.43) family.

Its subcellular location is the cell membrane. The catalysed reaction is fluoride(in) = fluoride(out). Its activity is regulated as follows. Na(+) is not transported, but it plays an essential structural role and its presence is essential for fluoride channel function. Its function is as follows. Fluoride-specific ion channel. Important for reducing fluoride concentration in the cell, thus reducing its toxicity. The sequence is that of Fluoride-specific ion channel FluC 1 from Staphylococcus aureus (strain NCTC 8325 / PS 47).